A 431-amino-acid polypeptide reads, in one-letter code: Adenylosuccinate synthetase (431 aa).

GTP is bound by residues 12–18 and 40–42; these read GDEGKGK and GHS. The active-site Proton acceptor is aspartate 13. Mg(2+) is bound by residues aspartate 13 and glycine 40. IMP is bound by residues 13–16 and 38–41; these read DEGK and NAGH. The active-site Proton donor is histidine 41. Residues 114-133 are disordered; the sequence is QQQERDRSKNGEKIGTTNKG. Residues 115 to 125 show a composition bias toward basic and acidic residues; the sequence is QQERDRSKNGE. IMP is bound by residues threonine 130, arginine 144, glutamine 225, threonine 240, and arginine 304. Residue 300–306 participates in substrate binding; it reads TVTKRPR. GTP-binding positions include arginine 306, 332–334, and 414–416; these read CLD and SIG.

It belongs to the adenylosuccinate synthetase family. Homodimer. The cofactor is Mg(2+).

The protein resides in the cytoplasm. The catalysed reaction is IMP + L-aspartate + GTP = N(6)-(1,2-dicarboxyethyl)-AMP + GDP + phosphate + 2 H(+). Its pathway is purine metabolism; AMP biosynthesis via de novo pathway; AMP from IMP: step 1/2. In terms of biological role, plays an important role in the de novo pathway of purine nucleotide biosynthesis. Catalyzes the first committed step in the biosynthesis of AMP from IMP. The chain is Adenylosuccinate synthetase from Pediococcus pentosaceus (strain ATCC 25745 / CCUG 21536 / LMG 10740 / 183-1w).